Consider the following 110-residue polypeptide: Phosphoribosyl-ATP pyrophosphatase (110 aa).

Belongs to the PRA-PH family.

The protein localises to the cytoplasm. The catalysed reaction is 1-(5-phospho-beta-D-ribosyl)-ATP + H2O = 1-(5-phospho-beta-D-ribosyl)-5'-AMP + diphosphate + H(+). It functions in the pathway amino-acid biosynthesis; L-histidine biosynthesis; L-histidine from 5-phospho-alpha-D-ribose 1-diphosphate: step 2/9. This chain is Phosphoribosyl-ATP pyrophosphatase (hisE), found in Azotobacter chroococcum mcd 1.